The primary structure comprises 400 residues: MKYDVLARAGFARRGNLHLPHSIVETPVFMPVGTQGTMKGVVTEQLVAMDCRILLCNTYHLGHRPGHERVKAAGGIHKMMNWNRSILTDSGGFQMVSLSKLMTVDENGVNFESPHTGEMMALPPEKSIEIQQALGADIMMQLDHVIHVLTTGDIVKEAMHRSIRWLDRCKVAHTRDDQAMFPILQGGLNLDLRKECAEEMAKRAKVGIAIGGLSGGEEKDHFWRVVAACCAALPPHLPRYVMGVGFPVDLVICSFLGADMFDCVYPTRTARFGTAMVRRGGLMQLNQKRYKEDFLPIDDKCKCNTCKNYTRAYIHSIAGKETVACHLVSIHNIKHQLDLMRDVRQAIQSNSVEKFLRQFLFDYYGPIQSENPSKQDTEKVQEVPQWVRDAVDHMGYTLDF.

Asp-89 serves as the catalytic Proton acceptor. Residues 89–93 (DSGGF), Asp-143, Gln-185, and Gly-212 contribute to the substrate site. The interval 243-249 (GVGFPVD) is RNA binding. Asp-262 acts as the Nucleophile in catalysis. Residues 267–271 (TRTAR) form an RNA binding; important for wobble base 34 recognition region. The Zn(2+) site is built by Cys-301, Cys-303, Cys-306, and His-331.

This sequence belongs to the queuine tRNA-ribosyltransferase family. As to quaternary structure, heterodimer of a catalytic subunit and an accessory subunit. Zn(2+) is required as a cofactor.

The protein localises to the cytoplasm. It carries out the reaction guanosine(34) in tRNA + queuine = queuosine(34) in tRNA + guanine. In terms of biological role, catalytic subunit of the queuine tRNA-ribosyltransferase (TGT) that catalyzes the base-exchange of a guanine (G) residue with queuine (Q) at position 34 (anticodon wobble position) in tRNAs with GU(N) anticodons (tRNA-Asp, -Asn, -His and -Tyr), resulting in the hypermodified nucleoside queuosine (7-(((4,5-cis-dihydroxy-2-cyclopenten-1-yl)amino)methyl)-7-deazaguanosine). Catalysis occurs through a double-displacement mechanism. The nucleophile active site attacks the C1' of nucleotide 34 to detach the guanine base from the RNA, forming a covalent enzyme-RNA intermediate. The proton acceptor active site deprotonates the incoming queuine, allowing a nucleophilic attack on the C1' of the ribose to form the product. In Caenorhabditis briggsae, this protein is Queuine tRNA-ribosyltransferase catalytic subunit.